We begin with the raw amino-acid sequence, 742 residues long: Serine/threonine-protein kinase SKY1 (742 aa).

The interval 13-146 is disordered; that stretch reads KSAHLADTST…KDYRPGGYHP (134 aa). Residues 19–35 are compositionally biased toward polar residues; sequence DTSTDASISCEEATSSQ. Residues 56 to 73 are compositionally biased toward low complexity; that stretch reads TKSKLSLALQTSKSSSSA. Positions 81 to 101 are enriched in basic and acidic residues; it reads TSSKTEDFSTKSIKKKPDSGV. Residues 106–127 are compositionally biased toward low complexity; sequence SIQSDSGPQSDSDLDSDSSISS. The segment covering 128-140 has biased composition (basic and acidic residues); sequence CDERNEESLKDYR. The region spanning 158 to 706 is the Protein kinase domain; that stretch reads YILVRKLGWG…AGGLVNHPWL (549 aa). Residues 164-172 and Lys187 each bind ATP; that span reads LGWGHFSTV. The active-site Proton acceptor is Asp294. 2 positions are modified to phosphothreonine: Thr383 and Thr386. A phosphoserine mark is found at Ser388, Ser393, Ser410, Ser427, Ser432, Ser445, Ser449, and Ser453. The interval 459 to 491 is disordered; it reads INEDSNDNNNNDNSKNKNNNNNNSNNNNNEDIM. Low complexity predominate over residues 465 to 489; the sequence is DNNNNDNSKNKNNNNNNSNNNNNED.

The protein belongs to the protein kinase superfamily. Ser/Thr protein kinase family.

The catalysed reaction is L-seryl-[protein] + ATP = O-phospho-L-seryl-[protein] + ADP + H(+). It catalyses the reaction L-threonyl-[protein] + ATP = O-phospho-L-threonyl-[protein] + ADP + H(+). Its function is as follows. Constitutively active kinase, specifically and sequentially phosphorylates serine/arginine (SR)-type shuttling mRNA binding proteins in their RS dipeptide repeats. This chain is Serine/threonine-protein kinase SKY1 (SKY1), found in Saccharomyces cerevisiae (strain ATCC 204508 / S288c) (Baker's yeast).